We begin with the raw amino-acid sequence, 180 residues long: Inosine/xanthosine triphosphatase (180 aa).

8–13 provides a ligand contact to substrate; the sequence is TTNPAK. Aspartate 38 and glutamate 68 together coordinate Mg(2+). Substrate is bound at residue 68-69; sequence EA.

This sequence belongs to the YjjX NTPase family. Homodimer. It depends on Mg(2+) as a cofactor. Mn(2+) is required as a cofactor.

The enzyme catalyses XTP + H2O = XDP + phosphate + H(+). It carries out the reaction ITP + H2O = IDP + phosphate + H(+). Functionally, phosphatase that hydrolyzes non-canonical purine nucleotides such as XTP and ITP to their respective diphosphate derivatives. Probably excludes non-canonical purines from DNA/RNA precursor pool, thus preventing their incorporation into DNA/RNA and avoiding chromosomal lesions. The sequence is that of Inosine/xanthosine triphosphatase from Yersinia pseudotuberculosis serotype IB (strain PB1/+).